The primary structure comprises 714 residues: Glycine--tRNA ligase beta subunit (714 aa).

It belongs to the class-II aminoacyl-tRNA synthetase family. In terms of assembly, tetramer of two alpha and two beta subunits.

The protein resides in the cytoplasm. It catalyses the reaction tRNA(Gly) + glycine + ATP = glycyl-tRNA(Gly) + AMP + diphosphate. The protein is Glycine--tRNA ligase beta subunit of Rhodospirillum centenum (strain ATCC 51521 / SW).